Consider the following 278-residue polypeptide: Splicing factor YJU2 (278 aa).

Cysteine 51, cysteine 54, cysteine 88, and cysteine 91 together coordinate Zn(2+). Residues 228–278 (HRQRTNKPGNNNDEKRTPLFNPTSTKGKIQKKSSVRTNPLGIVIKRGKSLK) form a disordered region. Short sequence motifs (nuclear localization signal) lie at residues 242–258 (KRTPLFNPTSTKGKIQK) and 260–278 (SSVRTNPLGIVIKRGKSLK).

This sequence belongs to the CWC16 family. YJU2 subfamily. In terms of assembly, component of the spliceosome. Present in the activated B complex, the catalytically activated B* complex which catalyzes the branching, the catalytic step 1 C complex catalyzing the exon ligation, and the postcatalytic P complex containing the ligated exons (mRNA) and the excised lariat intron. Interacts (via C-terminus) with CLF1. Interacts (via N-terminus) with SYF1. Interacts with U2 snRNA; this interaction is direct. Identified in the CWC complex (or CEF1-associated complex), a spliceosome sub-complex reminiscent of a late-stage spliceosome composed of the U2, U5 and U6 snRNAs and at least BUD13, BUD31, BRR2, CDC40, CEF1, CLF1, CUS1, CWC2, CWC15, CWC21, CWC22, CWC23, CWC24, CWC25, CWC27, ECM2, HSH155, IST3, ISY1, LEA1, MSL1, NTC20, PRP8, PRP9, PRP11, PRP19, PRP21, PRP22, PRP45, PRP46, SLU7, SMB1, SMD1, SMD2, SMD3, SMX2, SMX3, SNT309, SNU114, SPP2, SYF1, SYF2, RSE1 and YJU2.

The protein localises to the nucleus. In terms of biological role, part of the spliceosome which catalyzes two sequential transesterification reactions, first the excision of the non-coding intron from pre-mRNA and then the ligation of the coding exons to form the mature mRNA. Plays a role (via N-terminus) in stabilizing the structure of the spliceosome catalytic core and docking of the branch helix into the active site, producing 5'-exon and lariat intron-3'-intermediates. Further stabilizes spliceosome conformation for 3'-splice site docking (via C-terminus) promoting exon ligation. In Saccharomyces cerevisiae (strain ATCC 204508 / S288c) (Baker's yeast), this protein is Splicing factor YJU2.